The following is a 200-amino-acid chain: UPF0316 protein Mhun_0543 (200 aa).

The next 3 membrane-spanning stretches (helical) occupy residues 3–23 (VGFL…IFLA), 44–64 (FIAP…IGQV), and 71–91 (PICY…GMEL).

It belongs to the UPF0316 family.

The protein localises to the cell membrane. In Methanospirillum hungatei JF-1 (strain ATCC 27890 / DSM 864 / NBRC 100397 / JF-1), this protein is UPF0316 protein Mhun_0543.